The following is an 820-amino-acid chain: Phenylalanine--tRNA ligase beta subunit (820 aa).

Positions 42 to 154 constitute a tRNA-binding domain; that stretch reads KGGLEGLVIG…EDAVPGTLAK (113 aa). The region spanning 413–489 is the B5 domain; that stretch reads AQDFIVELTY…RIYGYNNVEI (77 aa). Mg(2+)-binding residues include aspartate 467, aspartate 473, glutamate 476, and aspartate 477. Residues 727–820 form the FDX-ACB domain; it reads SKFPAVKRDL…LEDKLGAKLR (94 aa).

It belongs to the phenylalanyl-tRNA synthetase beta subunit family. Type 1 subfamily. As to quaternary structure, tetramer of two alpha and two beta subunits. The cofactor is Mg(2+).

The protein resides in the cytoplasm. The enzyme catalyses tRNA(Phe) + L-phenylalanine + ATP = L-phenylalanyl-tRNA(Phe) + AMP + diphosphate + H(+). The sequence is that of Phenylalanine--tRNA ligase beta subunit from Bacteroides fragilis (strain YCH46).